Here is a 287-residue protein sequence, read N- to C-terminus: ATP synthase gamma chain (287 aa).

It belongs to the ATPase gamma chain family. In terms of assembly, F-type ATPases have 2 components, CF(1) - the catalytic core - and CF(0) - the membrane proton channel. CF(1) has five subunits: alpha(3), beta(3), gamma(1), delta(1), epsilon(1). CF(0) has three main subunits: a, b and c.

It is found in the cell inner membrane. Its function is as follows. Produces ATP from ADP in the presence of a proton gradient across the membrane. The gamma chain is believed to be important in regulating ATPase activity and the flow of protons through the CF(0) complex. This is ATP synthase gamma chain from Geobacter metallireducens (strain ATCC 53774 / DSM 7210 / GS-15).